A 382-amino-acid chain; its full sequence is Mannitol-1-phosphate 5-dehydrogenase (382 aa).

NAD(+) is bound at residue 3 to 14 (AIHFGAGNIGRG).

It belongs to the mannitol dehydrogenase family.

The enzyme catalyses D-mannitol 1-phosphate + NAD(+) = beta-D-fructose 6-phosphate + NADH + H(+). The protein is Mannitol-1-phosphate 5-dehydrogenase of Psychromonas ingrahamii (strain DSM 17664 / CCUG 51855 / 37).